The sequence spans 121 residues: uncharacterized protein (121 aa).

Disordered stretches follow at residues 1-28 (MGCA…QNGD) and 60-81 (QENL…EIPG). Phosphoserine occurs at positions 95 and 115.

This is an uncharacterized protein from Mus musculus (Mouse).